Here is a 397-residue protein sequence, read N- to C-terminus: Probable transport protein MmpL6 (397 aa).

Transmembrane regions (helical) follow at residues 190–210 (YDLL…MMII), 214–234 (LVAA…SFGL), 242–262 (LLGI…LLAV), 293–313 (TGGV…SFVF), and 328–348 (LGLL…IAVL).

Belongs to the resistance-nodulation-cell division (RND) (TC 2.A.6) family. MmpL subfamily.

It localises to the cell membrane. This Mycobacterium tuberculosis (strain CDC 1551 / Oshkosh) protein is Probable transport protein MmpL6 (mmpL6).